Reading from the N-terminus, the 1783-residue chain is 6-methylsalicylic acid synthase (1783 aa).

Residues 1–31 (MITSTSSTEVLTPANGSDDSKGTTTPATSSG) show a composition bias toward polar residues. Residues 1 to 40 (MITSTSSTEVLTPANGSDDSKGTTTPATSSGDPEMHDDLL) are disordered. The Ketosynthase family 3 (KS3) domain occupies 45–474 (HDDVAIIGMA…GTVSHAIIEA (430 aa)). Active-site for beta-ketoacyl synthase activity residues include Cys217, His352, and His394. Positions 587–884 (WVFSGHGAQW…TPTMVRKQPA (298 aa)) are malonyl-CoA:ACP transacylase (MAT) domain. Catalysis depends on Ser673, which acts as the For acyl/malonyl transferase activity. The interval 942–1215 (THKPAANDLL…AFAGVEGESL (274 aa)) is product template (PT) domain. The N-terminal hotdog fold stretch occupies residues 948-1064 (NDLLGTRTAL…ATVGADATPS (117 aa)). The region spanning 948–1216 (NDLLGTRTAL…FAGVEGESLS (269 aa)) is the PKS/mFAS DH domain. The active-site Proton acceptor; for dehydratase activity is His980. Positions 1078–1216 (PQKLSDSFSI…FAGVEGESLS (139 aa)) are C-terminal hotdog fold. Residue Asp1130 is the Proton donor; for dehydratase activity of the active site. Positions 1707 to 1781 (EYVLVVVKKC…HLVEYFCQVL (75 aa)) constitute a Carrier domain. The residue at position 1741 (Ser1741) is an O-(pantetheine 4'-phosphoryl)serine.

It catalyses the reaction 3 malonyl-CoA + acetyl-CoA + NADPH + 3 H(+) = 6-methylsalicylate + 3 CO2 + NADP(+) + 4 CoA + H2O. It functions in the pathway secondary metabolite biosynthesis; terpenoid biosynthesis. Its function is as follows. Non-reducing polyketide synthase; part of the gene cluster that mediates the biosynthesis of macrophorins, isoprenoid epoxycyclohexenones containing cyclized drimane moieties. The first step of the pathway is the synthesis of 6-methylsalicylic acid (6-MSA) by the polyketide synthase macA. 6-MSA is then converted to m-cresol by the decarboxylase macB. The cytochrome P450 monooxygenase macC then catalyzes the oxidation of m-cresol to toluquinol. Epoxidation of toluquinol is then performed by the short chain dehydrogenase macD, with the help of macE, and a further prenylation by macG leads to 7-deacetoxyyanuthone A. The next step is the hydroxylation of C-22 of 7-deacetoxyyanuthone A by the cytochrome P450 monooxygenase macH to yield 22-deacetylyanuthone A. O-Mevalon transferase macI then attaches mevalon to the hydroxyl group of 22-deacetylyanuthone A to produce yanuthone E. The terpene cyclase macJ catalyzes the cyclization of 22-deacetylyanuthone A to macrophorin A. MacJ is also able to catalyze cyclization of yanuthone E and 7-deacetoxyyanuthone A to their corresponding macrophorins. The macJ products can be further modified by macH and macJ, as well as by the FAD-dependent monooxygenase macF, to produce additional macrophorins, including 4'-oxomacrophorin A, 4'-oxomacrophorin D and 4'-oxomacrophorin E. This Penicillium terrestre protein is 6-methylsalicylic acid synthase.